Consider the following 145-residue polypeptide: Synaptojanin-2-binding protein (145 aa).

The Cytoplasmic segment spans residues 1 to 117 (MNGRVDYLVT…GHRGEGDPSG (117 aa)). The PDZ domain maps to 13–100 (EINLTRGPSG…AVSLRVQHRL (88 aa)). Residues 118 to 138 (IPIFMVLVPVFALTMVAAWAF) form a helical membrane-spanning segment. The Mitochondrial intermembrane portion of the chain corresponds to 139–145 (MRYRQQL).

In terms of assembly, binds (via the PDZ domain) to isoform 2A of SYNJ2 (via the unique motif in the C-terminus). Interacts (via C-terminus) with RALBP1. Interacts (via PDZ domain) with ACVR2A (via C-terminus) and ACVR2B (via C-terminus). Forms a ternary complex with ACVR2A and RALBP1. Interacts with MAPK12. Interacts with DLL1; enhances DLL1 protein stability, and promotes notch signaling in endothelial cells.

The protein localises to the mitochondrion outer membrane. In terms of biological role, regulates endocytosis of activin type 2 receptor kinases through the Ral/RALBP1-dependent pathway and may be involved in suppression of activin-induced signal transduction. This chain is Synaptojanin-2-binding protein (SYNJ2BP), found in Homo sapiens (Human).